The following is a 153-amino-acid chain: ORM1-like protein 2 (153 aa).

At Met-1–Gly-21 the chain is on the cytoplasmic side. 2 helical membrane passes run Ile-22–Phe-42 and Phe-43–Phe-63. Over Leu-64–Ser-105 the chain is Cytoplasmic. Residues Pro-106–Ile-126 form a helical membrane-spanning segment. The Extracellular portion of the chain corresponds to Asn-127 to Tyr-153.

It belongs to the ORM family. Ceramide-sensitive subunit of the serine palmitoyltransferase (SPT) complex, which is also composed of SPTLC1, SPTLC2/3 and SPTSSA/B.

Its subcellular location is the endoplasmic reticulum membrane. In terms of biological role, plays an essential role in the homeostatic regulation of sphingolipid de novo biosynthesis by modulating the activity of the serine palmitoyltransferase (SPT) in response to ceramide levels. When complexed to SPT, the binding of ceramides to its N-terminus stabilizes a conformation that block SPT substrate entry, hence preventing SPT catalytic activity. Through this mechanism, maintains ceramide levels at sufficient concentrations for the production of complex sphingolipids, but which prevents the accumulation of ceramides to levels that trigger apoptosis. This chain is ORM1-like protein 2 (ORMDL2), found in Bos taurus (Bovine).